The chain runs to 184 residues: Protein MEH1 (184 aa).

Residue G2 is the site of N-myristoyl glycine attachment. 2 S-palmitoyl cysteine lipidation sites follow: C7 and C8. Residues 30–71 (QGNANDEYDAEQMRLKEHEHEQKLLAREQELRDIVANTNDKL) are a coiled coil. Residues 89-147 (LQEALDKRQQEEGGDSREDERSAGDDNLSGHSVPSSGSAQATTHQTAPRTNTFTLLTSP) are disordered. Over residues 92–112 (ALDKRQQEEGGDSREDERSAG) the composition is skewed to basic and acidic residues. A compositionally biased stretch (polar residues) spans 117–147 (SGHSVPSSGSAQATTHQTAPRTNTFTLLTSP). 2 positions are modified to phosphoserine: S146 and S149.

As to quaternary structure, component of the GSE complex composed of GTR1, GTR2, SLM4, MEH1 and LTV1. Component of the EGO complex, at least composed of GTR2, SLM4 and MEH1.

It is found in the vacuole membrane. Functionally, component of the GSE complex, a GTPase complex required for intracellular sorting of GAP1 out of the endosome. Component of the EGO complex, a complex involved in the regulation of microautophagy. The protein is Protein MEH1 (MEH1) of Saccharomyces cerevisiae (strain ATCC 204508 / S288c) (Baker's yeast).